A 439-amino-acid polypeptide reads, in one-letter code: UDP-N-acetylglucosamine--N-acetylmuramyl-(pentapeptide) pyrophosphoryl-undecaprenol N-acetylglucosamine transferase (439 aa).

UDP-N-acetyl-alpha-D-glucosamine is bound by residues T25 to G27, R218, S248, and Q362.

This sequence belongs to the glycosyltransferase 28 family. MurG subfamily.

It localises to the cell membrane. The enzyme catalyses di-trans,octa-cis-undecaprenyl diphospho-N-acetyl-alpha-D-muramoyl-L-alanyl-D-glutamyl-meso-2,6-diaminopimeloyl-D-alanyl-D-alanine + UDP-N-acetyl-alpha-D-glucosamine = di-trans,octa-cis-undecaprenyl diphospho-[N-acetyl-alpha-D-glucosaminyl-(1-&gt;4)]-N-acetyl-alpha-D-muramoyl-L-alanyl-D-glutamyl-meso-2,6-diaminopimeloyl-D-alanyl-D-alanine + UDP + H(+). Its pathway is cell wall biogenesis; peptidoglycan biosynthesis. Cell wall formation. Catalyzes the transfer of a GlcNAc subunit on undecaprenyl-pyrophosphoryl-MurNAc-pentapeptide (lipid intermediate I) to form undecaprenyl-pyrophosphoryl-MurNAc-(pentapeptide)GlcNAc (lipid intermediate II). This chain is UDP-N-acetylglucosamine--N-acetylmuramyl-(pentapeptide) pyrophosphoryl-undecaprenol N-acetylglucosamine transferase, found in Roseiflexus sp. (strain RS-1).